Reading from the N-terminus, the 333-residue chain is Gamma-D-glutamyl-L-lysine dipeptidyl-peptidase (333 aa).

The first 23 residues, 1 to 23 (MKKVGTAFLTTLFIFSSFTSAHA), serve as a signal peptide directing secretion. Residues Glu-83, Tyr-118, 237–239 (DCS), and 256–257 (DS) each bind substrate. The region spanning 208–332 (TPAADDLINT…EEYAGARRYL (125 aa)) is the NlpC/P60 domain. Cys-238 functions as the Nucleophile in the catalytic mechanism. His-291 acts as the Proton acceptor in catalysis. His-303 is an active-site residue.

The protein belongs to the peptidase C40 family. In terms of assembly, monomer in solution.

The catalysed reaction is The enzyme releases L-Ala-gamma-D-Glu dipeptides from cell wall peptides via cleavage of an L-Ala-gamma-D-Glu-|-L-Lys bond.. Its pathway is cell wall degradation; peptidoglycan degradation. Functionally, specifically hydrolyzes gamma-D-glutamyl-L-lysine bonds in murein peptides, releasing L-Ala-D-Glu. The protein is Gamma-D-glutamyl-L-lysine dipeptidyl-peptidase of Bacillus cereus (strain ATCC 10987 / NRS 248).